The following is a 493-amino-acid chain: UDP-glucose 6-dehydrogenase (493 aa).

NAD(+) is bound by residues 11-16 (GAGYVG), Asp36, Arg41, and 89-93 (VNTPT). Positions 88-110 (SVNTPTKTYGMGKGRAADLKYIE) are disordered. N6-acetyllysine is present on Lys107. Residues 129-135 (KSTVPVR) are allosteric switch region. 130 to 132 (STV) contacts NAD(+). The active-site Proton donor/acceptor is Glu161. Residues 161–165 (EFLAE), 220–224 (KLAAN), Arg260, and 267–273 (KASVGFG) contribute to the substrate site. Residue Glu165 coordinates NAD(+). Lys220 functions as the Proton donor/acceptor in the catalytic mechanism. Cys276 (nucleophile) is an active-site residue. Residue 276–279 (CFQK) coordinates NAD(+). The important for formation of active hexamer structure stretch occupies residues 321–325 (SLFNT). Residue 338-339 (FK) participates in substrate binding. Arg346 is a binding site for NAD(+). A substrate-binding site is contributed by Arg442. The interval 466 to 493 (VSSKRIPYTPGEIPKFSLQDPPNKKPKV) is disordered. Thr474 carries the phosphothreonine modification.

Belongs to the UDP-glucose/GDP-mannose dehydrogenase family. In terms of assembly, homohexamer.

It carries out the reaction UDP-alpha-D-glucose + 2 NAD(+) + H2O = UDP-alpha-D-glucuronate + 2 NADH + 3 H(+). It functions in the pathway nucleotide-sugar biosynthesis; UDP-alpha-D-glucuronate biosynthesis; UDP-alpha-D-glucuronate from UDP-alpha-D-glucose: step 1/1. With respect to regulation, UDP-alpha-D-xylose (UDX) acts as a feedback inhibitor. It binds at the same site as the substrate, but functions as allosteric inhibitor by triggering a conformation change that disrupts the active hexameric ring structure and gives rise to an inactive, horseshoe-shaped hexamer. In terms of biological role, catalyzes the formation of UDP-alpha-D-glucuronate, a constituent of complex glycosaminoglycans. Required for the biosynthesis of chondroitin sulfate and heparan sulfate. Required for embryonic development via its role in the biosynthesis of glycosaminoglycans. Required for proper brain and neuronal development. The polypeptide is UDP-glucose 6-dehydrogenase (Ugdh) (Rattus norvegicus (Rat)).